The following is a 263-amino-acid chain: HTH-type transcriptional repressor NanR (263 aa).

The tract at residues 1 to 25 (MDVMNAFDSQAEDSPTSLGRSLRRR) is disordered. The HTH gntR-type domain occupies 30–98 (KKLSEMVEEE…NGERARVSRP (69 aa)). A DNA-binding region (H-T-H motif) is located at residues 58-77 (ERELMAFFNVGRPSVREALA).

This sequence belongs to the NanR family.

In terms of biological role, transcriptional repressor that controls expression of the genes required for the catabolism of sialic acids. The chain is HTH-type transcriptional repressor NanR from Salmonella schwarzengrund (strain CVM19633).